The chain runs to 393 residues: uncharacterized protein (393 aa).

ATP is bound at residue 67–74 (GPDGMGKS).

This is an uncharacterized protein from Mycobacterium tuberculosis (strain CDC 1551 / Oshkosh).